A 454-amino-acid chain; its full sequence is Transcription factor efuD (454 aa).

The region spanning 4–111 is the HTH TFE/IIEalpha-type domain; the sequence is AKELIRITAR…NYHRAIDSIK (108 aa). Residues 327–454 form a disordered region; sequence LRTDDDGAMD…DEDELEFEDI (128 aa). Positions 353–372 are enriched in acidic residues; the sequence is DQDEEEEEEDDDDDEFEDVD. The span at 387–401 shows a compositional bias: polar residues; the sequence is SVSTPATSAQVSSTA. Residues 423–437 show a composition bias toward low complexity; sequence APAAAASSQAAAAES. The span at 442–454 shows a compositional bias: acidic residues; sequence SDEDEDELEFEDI.

This sequence belongs to the TFIIE alpha subunit family.

It localises to the nucleus. Functionally, transcription factor; part of the gene cluster that mediates the biosynthesis of enfumafungin, a glycosylated fernene-type triterpenoid with potent antifungal activity, mediated by its interaction with beta-1,3-glucan synthase and the fungal cell wall. Is possibly responsible for the transcription regulation of one or more genes within the gene cluster. This is Transcription factor efuD from Hormonema carpetanum.